The primary structure comprises 142 residues: Large ribosomal subunit protein uL11 (142 aa).

The protein belongs to the universal ribosomal protein uL11 family. Part of the ribosomal stalk of the 50S ribosomal subunit. Interacts with L10 and the large rRNA to form the base of the stalk. L10 forms an elongated spine to which L12 dimers bind in a sequential fashion forming a multimeric L10(L12)X complex. In terms of processing, one or more lysine residues are methylated.

Forms part of the ribosomal stalk which helps the ribosome interact with GTP-bound translation factors. This is Large ribosomal subunit protein uL11 from Mycobacterium ulcerans (strain Agy99).